Here is a 464-residue protein sequence, read N- to C-terminus: NADH dehydrogenase [ubiquinone] flavoprotein 1, mitochondrial (464 aa).

The N-terminal 20 residues, 1–20, are a transit peptide targeting the mitochondrion; the sequence is MLAARHFLGGLVPVRVSVRF. Lys-81 bears the N6-acetyllysine; alternate mark. Lys-81 is modified (N6-succinyllysine; alternate). Residue 87–96 participates in NADH binding; it reads GRGGAGFPTG. Lys-104 carries the post-translational modification N6-acetyllysine. Residue 199–247 coordinates FMN; the sequence is RGAGAYICGEETALIESIEGKQGKPRLKPPFPADVGVFGCPTTVANVET. Position 257 is an omega-N-methylarginine (Arg-257). An N6-acetyllysine modification is found at Lys-375. [4Fe-4S] cluster contacts are provided by Cys-379, Cys-382, Cys-385, and Cys-425.

This sequence belongs to the complex I 51 kDa subunit family. Core subunit of respiratory chain NADH dehydrogenase (Complex I) which is composed of 45 different subunits. This is a component of the flavoprotein-sulfur (FP) fragment of the enzyme. Interacts with RAB5IF. It depends on FMN as a cofactor. [4Fe-4S] cluster serves as cofactor.

It is found in the mitochondrion inner membrane. The enzyme catalyses a ubiquinone + NADH + 5 H(+)(in) = a ubiquinol + NAD(+) + 4 H(+)(out). Core subunit of the mitochondrial membrane respiratory chain NADH dehydrogenase (Complex I) which catalyzes electron transfer from NADH through the respiratory chain, using ubiquinone as an electron acceptor. Part of the peripheral arm of the enzyme, where the electrons from NADH are accepted by flavin mononucleotide (FMN) and then passed along a chain of iron-sulfur clusters by electron tunnelling to the final acceptor ubiquinone. Contains FMN, which is the initial electron acceptor as well as one iron-sulfur cluster. The polypeptide is NADH dehydrogenase [ubiquinone] flavoprotein 1, mitochondrial (Mus musculus (Mouse)).